Here is a 92-residue protein sequence, read N- to C-terminus: Larval cuticle protein 9 (92 aa).

The first 16 residues, 1-16 (MKFVIVLACLLAVVFA), serve as a signal peptide directing secretion. The Chitin-binding type R&amp;R domain maps to 31–92 (LLDFNYAYEL…TGYHPKVVEA (62 aa)).

In terms of biological role, component of the cuticle of the larva. This Drosophila melanogaster (Fruit fly) protein is Larval cuticle protein 9 (Lcp9).